Here is a 511-residue protein sequence, read N- to C-terminus: 2-isopropylmalate synthase (511 aa).

Positions 4 to 266 constitute a Pyruvate carboxyltransferase domain; that stretch reads IDIFDTTLRD…ETGIQLQEIK (263 aa). Mn(2+)-binding residues include D13, H201, H203, and N237. The tract at residues 392 to 511 is regulatory domain; sequence ELKMVQVQYG…IKESLRAHPV (120 aa).

It belongs to the alpha-IPM synthase/homocitrate synthase family. LeuA type 1 subfamily. Homodimer. Requires Mn(2+) as cofactor.

It localises to the cytoplasm. It catalyses the reaction 3-methyl-2-oxobutanoate + acetyl-CoA + H2O = (2S)-2-isopropylmalate + CoA + H(+). It participates in amino-acid biosynthesis; L-leucine biosynthesis; L-leucine from 3-methyl-2-oxobutanoate: step 1/4. Its function is as follows. Catalyzes the condensation of the acetyl group of acetyl-CoA with 3-methyl-2-oxobutanoate (2-ketoisovalerate) to form 3-carboxy-3-hydroxy-4-methylpentanoate (2-isopropylmalate). This Lysinibacillus sphaericus (strain C3-41) protein is 2-isopropylmalate synthase.